Reading from the N-terminus, the 380-residue chain is Tryptophan--tRNA ligase (380 aa).

Residues 81-89 (PSLGMHIGH) carry the 'HIGH' region motif. The short motif at 253–257 (KMSSS) is the 'KMSKS' region element.

This sequence belongs to the class-I aminoacyl-tRNA synthetase family.

The protein localises to the cytoplasm. It carries out the reaction tRNA(Trp) + L-tryptophan + ATP = L-tryptophyl-tRNA(Trp) + AMP + diphosphate + H(+). The sequence is that of Tryptophan--tRNA ligase from Saccharolobus solfataricus (strain ATCC 35092 / DSM 1617 / JCM 11322 / P2) (Sulfolobus solfataricus).